The sequence spans 489 residues: 2-(3-amino-3-carboxypropyl)histidine synthase subunit 2 (489 aa).

Methionine 1 carries the post-translational modification N-acetylmethionine. Serine 7 carries the phosphoserine modification. Residues cysteine 89, cysteine 110, and cysteine 341 each coordinate [4Fe-4S] cluster. At serine 446 the chain carries Phosphoserine. A Phosphothreonine modification is found at threonine 467. A Phosphoserine modification is found at serine 488.

It belongs to the DPH1/DPH2 family. DPH2 subfamily. Component of the 2-(3-amino-3-carboxypropyl)histidine synthase complex composed of DPH1, DPH2, DPH3 and a NADH-dependent reductase. Interacts with DPH1. It depends on [4Fe-4S] cluster as a cofactor.

It functions in the pathway protein modification; peptidyl-diphthamide biosynthesis. Functionally, required for the first step of diphthamide biosynthesis, a post-translational modification of histidine which occurs in elongation factor 2. DPH1 and DPH2 transfer a 3-amino-3-carboxypropyl (ACP) group from S-adenosyl-L-methionine (SAM) to a histidine residue, the reaction is assisted by a reduction system comprising DPH3 and a NADH-dependent reductase. Facilitates the reduction of the catalytic iron-sulfur cluster found in the DPH1 subunit. The chain is 2-(3-amino-3-carboxypropyl)histidine synthase subunit 2 (Dph2) from Mus musculus (Mouse).